We begin with the raw amino-acid sequence, 371 residues long: Chaperone protein DnaJ (371 aa).

The 65-residue stretch at 5–69 folds into the J domain; that stretch reads DYYEVLGLSK…QKRAQYDQFG (65 aa). The CR-type zinc finger occupies 133–215; that stretch reads GKELNVEIPV…CHGSSKVRKR (83 aa). Zn(2+)-binding residues include Cys-146, Cys-149, Cys-163, Cys-166, Cys-189, Cys-192, Cys-203, and Cys-206. CXXCXGXG motif repeat units lie at residues 146-153, 163-170, 189-196, and 203-210; these read CDTCKGSG, CKHCSGSG, CGHCSGTG, and CTTCHGSS.

Belongs to the DnaJ family. Homodimer. Requires Zn(2+) as cofactor.

The protein resides in the cytoplasm. In terms of biological role, participates actively in the response to hyperosmotic and heat shock by preventing the aggregation of stress-denatured proteins and by disaggregating proteins, also in an autonomous, DnaK-independent fashion. Unfolded proteins bind initially to DnaJ; upon interaction with the DnaJ-bound protein, DnaK hydrolyzes its bound ATP, resulting in the formation of a stable complex. GrpE releases ADP from DnaK; ATP binding to DnaK triggers the release of the substrate protein, thus completing the reaction cycle. Several rounds of ATP-dependent interactions between DnaJ, DnaK and GrpE are required for fully efficient folding. Also involved, together with DnaK and GrpE, in the DNA replication of plasmids through activation of initiation proteins. The polypeptide is Chaperone protein DnaJ (Bacillus cereus (strain ATCC 14579 / DSM 31 / CCUG 7414 / JCM 2152 / NBRC 15305 / NCIMB 9373 / NCTC 2599 / NRRL B-3711)).